We begin with the raw amino-acid sequence, 503 residues long: Maturase K (503 aa).

Belongs to the intron maturase 2 family. MatK subfamily.

Its subcellular location is the plastid. The protein resides in the chloroplast. Usually encoded in the trnK tRNA gene intron. Probably assists in splicing its own and other chloroplast group II introns. This is Maturase K from Aethionema cordifolium (Lebanon stonecress).